Consider the following 354-residue polypeptide: 3-isopropylmalate dehydrogenase (354 aa).

76–87 (GPRWDSAKERPE) contributes to the NAD(+) binding site. Residues R94, R104, R130, and D215 each coordinate substrate. Residues D215, D239, and D243 each contribute to the Mg(2+) site. 273–285 (GSAPDIAGKNKAN) provides a ligand contact to NAD(+).

The protein belongs to the isocitrate and isopropylmalate dehydrogenases family. LeuB type 1 subfamily. In terms of assembly, homodimer. Mg(2+) serves as cofactor. It depends on Mn(2+) as a cofactor.

It is found in the cytoplasm. It carries out the reaction (2R,3S)-3-isopropylmalate + NAD(+) = 4-methyl-2-oxopentanoate + CO2 + NADH. The protein operates within amino-acid biosynthesis; L-leucine biosynthesis; L-leucine from 3-methyl-2-oxobutanoate: step 3/4. Functionally, catalyzes the oxidation of 3-carboxy-2-hydroxy-4-methylpentanoate (3-isopropylmalate) to 3-carboxy-4-methyl-2-oxopentanoate. The product decarboxylates to 4-methyl-2 oxopentanoate. The chain is 3-isopropylmalate dehydrogenase from Bacillus cereus (strain ATCC 10987 / NRS 248).